The sequence spans 229 residues: Tubulin-specific chaperone B (229 aa).

One can recognise a CAP-Gly domain in the interval 170-212; the sequence is GATKFKEGVWVGVKYDEPVGKNDGSVAGVRYFDCDPKYGGFVR.

It belongs to the TBCB family. Supercomplex made of cofactors A to E. Cofactors A and D function by capturing and stabilizing tubulin in a quasi-native conformation. Cofactor E binds to the cofactor D-tubulin complex; interaction with cofactor C then causes the release of tubulin polypeptides that are committed to the native state.

The protein localises to the cytoplasm. The protein resides in the cytoskeleton. Binds to alpha-tubulin folding intermediates after their interaction with cytosolic chaperonin in the pathway leading from newly synthesized tubulin to properly folded heterodimer. This is Tubulin-specific chaperone B from Caenorhabditis elegans.